Reading from the N-terminus, the 112-residue chain is Iron-sulfur cluster assembly protein CyaY (112 aa).

This sequence belongs to the frataxin family.

Functionally, involved in iron-sulfur (Fe-S) cluster assembly. May act as a regulator of Fe-S biogenesis. This chain is Iron-sulfur cluster assembly protein CyaY, found in Janthinobacterium sp. (strain Marseille) (Minibacterium massiliensis).